A 782-amino-acid chain; its full sequence is Endonuclease MutS2 (782 aa).

336–343 (GPNTGGKT) serves as a coordination point for ATP. In terms of domain architecture, Smr spans 707 to 782 (LDLRGYRYED…GFGVTVATLK (76 aa)).

The protein belongs to the DNA mismatch repair MutS family. MutS2 subfamily. Homodimer. Binds to stalled ribosomes, contacting rRNA.

Functionally, endonuclease that is involved in the suppression of homologous recombination and thus may have a key role in the control of bacterial genetic diversity. Acts as a ribosome collision sensor, splitting the ribosome into its 2 subunits. Detects stalled/collided 70S ribosomes which it binds and splits by an ATP-hydrolysis driven conformational change. Acts upstream of the ribosome quality control system (RQC), a ribosome-associated complex that mediates the extraction of incompletely synthesized nascent chains from stalled ribosomes and their subsequent degradation. Probably generates substrates for RQC. The chain is Endonuclease MutS2 from Staphylococcus aureus (strain COL).